A 394-amino-acid polypeptide reads, in one-letter code: Argininosuccinate synthase (394 aa).

Residues A7–S15 and A34 each bind ATP. Positions 85 and 90 each coordinate L-citrulline. G115 contacts ATP. The L-aspartate site is built by T117, N121, and D122. N121 provides a ligand contact to L-citrulline. L-citrulline contacts are provided by R125, S176, S185, E261, and Y273.

It belongs to the argininosuccinate synthase family. Type 1 subfamily. In terms of assembly, homotetramer.

Its subcellular location is the cytoplasm. It catalyses the reaction L-citrulline + L-aspartate + ATP = 2-(N(omega)-L-arginino)succinate + AMP + diphosphate + H(+). It participates in amino-acid biosynthesis; L-arginine biosynthesis; L-arginine from L-ornithine and carbamoyl phosphate: step 2/3. The protein is Argininosuccinate synthase of Ehrlichia ruminantium (strain Welgevonden).